Reading from the N-terminus, the 244-residue chain is 1-(5-phosphoribosyl)-5-[(5-phosphoribosylamino)methylideneamino] imidazole-4-carboxamide isomerase (244 aa).

The active-site Proton acceptor is Asp-10. The Proton donor role is filled by Asp-129.

The protein belongs to the HisA/HisF family.

It is found in the cytoplasm. It catalyses the reaction 1-(5-phospho-beta-D-ribosyl)-5-[(5-phospho-beta-D-ribosylamino)methylideneamino]imidazole-4-carboxamide = 5-[(5-phospho-1-deoxy-D-ribulos-1-ylimino)methylamino]-1-(5-phospho-beta-D-ribosyl)imidazole-4-carboxamide. Its pathway is amino-acid biosynthesis; L-histidine biosynthesis; L-histidine from 5-phospho-alpha-D-ribose 1-diphosphate: step 4/9. The chain is 1-(5-phosphoribosyl)-5-[(5-phosphoribosylamino)methylideneamino] imidazole-4-carboxamide isomerase from Rhodococcus jostii (strain RHA1).